We begin with the raw amino-acid sequence, 348 residues long: Dihydroorotase (348 aa).

Zn(2+)-binding residues include H17 and H19. Substrate-binding positions include H19–R21 and N45. Zn(2+) is bound by residues K103, H140, and H178. The residue at position 103 (K103) is an N6-carboxylysine. H140 contacts substrate. L223 contributes to the substrate binding site. Zn(2+) is bound at residue D251. D251 is an active-site residue. Substrate contacts are provided by H255 and A267.

The protein belongs to the metallo-dependent hydrolases superfamily. DHOase family. Class II DHOase subfamily. In terms of assembly, homodimer. Zn(2+) is required as a cofactor.

The enzyme catalyses (S)-dihydroorotate + H2O = N-carbamoyl-L-aspartate + H(+). It participates in pyrimidine metabolism; UMP biosynthesis via de novo pathway; (S)-dihydroorotate from bicarbonate: step 3/3. Its function is as follows. Catalyzes the reversible cyclization of carbamoyl aspartate to dihydroorotate. This chain is Dihydroorotase, found in Escherichia coli O6:K15:H31 (strain 536 / UPEC).